Reading from the N-terminus, the 1076-residue chain is GPI inositol-deacylase A (1076 aa).

The helical transmembrane segment at Ile-3 to Ala-23 threads the bilayer. 2 N-linked (GlcNAc...) asparagine glycosylation sites follow: Asn-48 and Asn-119. Ser-240 is an active-site residue. N-linked (GlcNAc...) asparagine glycosylation is present at Asn-404. 2 consecutive transmembrane segments (helical) span residues Phe-765–Leu-785 and Trp-815–Tyr-835. An N-linked (GlcNAc...) asparagine glycan is attached at Asn-849. 3 helical membrane-spanning segments follow: residues Phe-855 to Leu-875, Ile-877 to Glu-897, and Phe-910 to Leu-930. 2 N-linked (GlcNAc...) asparagine glycosylation sites follow: Asn-952 and Asn-966. Transmembrane regions (helical) follow at residues Ser-970–Leu-990, Glu-1006–Ile-1026, and Ile-1035–Val-1055.

The protein belongs to the GPI inositol-deacylase family.

It localises to the endoplasmic reticulum membrane. Involved in inositol deacylation of GPI-anchored proteins which plays important roles in the quality control and ER-associated degradation of GPI-anchored proteins. This chain is GPI inositol-deacylase A (BST1A), found in Yarrowia lipolytica (strain CLIB 122 / E 150) (Yeast).